A 690-amino-acid polypeptide reads, in one-letter code: UvrABC system protein B (690 aa).

One can recognise a Helicase ATP-binding domain in the interval 30 to 188 (QGVMDGQTNQ…QELISLHFVR (159 aa)). Residue 43–50 (GVTGSGKT) coordinates ATP. Positions 96 to 119 (YYDFYQPEAYIPTMDKYIAKDLKI) match the Beta-hairpin motif. Residues 435 to 601 (QIDDLLEEIR…SIVKSVDQVL (167 aa)) form the Helicase C-terminal domain. The region spanning 641-676 (YAMAEELRLEMQEAAESMEFEKAAYLRDEVTKLEDA) is the UVR domain.

It belongs to the UvrB family. As to quaternary structure, forms a heterotetramer with UvrA during the search for lesions. Interacts with UvrC in an incision complex.

The protein localises to the cytoplasm. Its function is as follows. The UvrABC repair system catalyzes the recognition and processing of DNA lesions. A damage recognition complex composed of 2 UvrA and 2 UvrB subunits scans DNA for abnormalities. Upon binding of the UvrA(2)B(2) complex to a putative damaged site, the DNA wraps around one UvrB monomer. DNA wrap is dependent on ATP binding by UvrB and probably causes local melting of the DNA helix, facilitating insertion of UvrB beta-hairpin between the DNA strands. Then UvrB probes one DNA strand for the presence of a lesion. If a lesion is found the UvrA subunits dissociate and the UvrB-DNA preincision complex is formed. This complex is subsequently bound by UvrC and the second UvrB is released. If no lesion is found, the DNA wraps around the other UvrB subunit that will check the other stand for damage. The protein is UvrABC system protein B of Chlorobium phaeobacteroides (strain BS1).